Here is a 784-residue protein sequence, read N- to C-terminus: Cadherin-5 (784 aa).

A signal peptide spans 1-25; it reads MQRLMMLLATSGACLGLLAVAAVAA. Positions 26-47 are excised as a propeptide; that stretch reads AGANPAQRDTHSLLPTHRRQKR. 5 consecutive Cadherin domains span residues 48–151, 152–258, 259–372, 373–477, and 478–593; these read DWIW…WPVF, THRL…FPFF, TQTK…PPIF, QQPF…DNAP, and EFAK…MAAQ. At 48 to 599 the chain is on the extracellular side; that stretch reads DWIWNQMHID…MAAQVGVSIQ (552 aa). The Ca(2+) site is built by glutamate 58 and glutamate 59. Asparagine 61 is a glycosylation site (N-linked (GlcNAc...) (complex) asparagine). Ca(2+) contacts are provided by aspartate 109 and glutamate 111. Asparagine 112 is a glycosylation site (N-linked (GlcNAc...) (complex) asparagine). 5 residues coordinate Ca(2+): aspartate 143, valine 144, asparagine 145, aspartate 146, and asparagine 147. Asparagine 157 is a glycosylation site (N-linked (GlcNAc...) asparagine). Ca(2+) is bound by residues aspartate 177, aspartate 179, histidine 186, and aspartate 231. N-linked (GlcNAc...) asparagine glycosylation occurs at asparagine 362. The N-linked (GlcNAc...) (complex) asparagine glycan is linked to asparagine 442. 2 N-linked (GlcNAc...) asparagine glycosylation sites follow: asparagine 523 and asparagine 535. A helical transmembrane segment spans residues 600-620; sequence AVVAILLCILTITVITLLIFL. Residues 621-660 are required for interaction with PALS1; sequence RRRLRKQARAHGKSVPEIHEQLVTYDEEGGGEMDTTSYDV. Residues 621-784 lie on the Cytoplasmic side of the membrane; it reads RRRLRKQARA…GSDPREELLY (164 aa).

In terms of assembly, part of a complex composed of AMOTL2, MAGI1 and CDH5, within the complex AMOTL2 acts as a scaffold protein for the interaction of MAGI1 with CDH5. The complex is required for coupling actin fibers to cell junctions in endothelial cells. Within the complex AMOTL2 (via its N-terminus) interacts with CDH5. Interacts (via cadherin 5 domain) with PTPRB. Interacts with TRPC4. Interacts with KRIT1. Interacts with PARD3. Interacts with RTN4 (isoform B). Interacts with PALS1; the interaction promotes PALS1 localization to cell junctions and is required for CDH5-mediated vascular lumen formation and endothelial cell. Interacts with CTNND1/p120-catenin; the interaction controls CADH5 endocytosis. In terms of processing, phosphorylated on tyrosine residues by KDR/VEGFR-2. Dephosphorylated by PTPRB. Post-translationally, O-glycosylated. Expressed in endothelial cells (at protein level). Expressed in the brain.

The protein resides in the cell junction. It is found in the adherens junction. Its subcellular location is the cell membrane. It localises to the cytoplasm. Cadherins are calcium-dependent cell adhesion proteins. They preferentially interact with themselves in a homophilic manner in connecting cells; cadherins may thus contribute to the sorting of heterogeneous cell types. This cadherin may play a important role in endothelial cell biology through control of the cohesion and organization of the intercellular junctions. It associates with alpha-catenin forming a link to the cytoskeleton. Plays a role in coupling actin fibers to cell junctions in endothelial cells, via acting as a cell junctional complex anchor for AMOTL2 and MAGI1. Acts in concert with KRIT1 and PALS1 to establish and maintain correct endothelial cell polarity and vascular lumen. These effects are mediated by recruitment and activation of the Par polarity complex and RAP1B. Required for activation of PRKCZ and for the localization of phosphorylated PRKCZ, PARD3, TIAM1 and RAP1B to the cell junction. Associates with CTNND1/p120-catenin to control CADH5 endocytosis. The protein is Cadherin-5 of Homo sapiens (Human).